Reading from the N-terminus, the 141-residue chain is uncharacterized protein (141 aa).

The chain crosses the membrane as a helical span at residues Ile-114–Ile-134.

The protein localises to the membrane. This is an uncharacterized protein from Schizosaccharomyces pombe (strain 972 / ATCC 24843) (Fission yeast).